Here is a 491-residue protein sequence, read N- to C-terminus: Glutamyl-tRNA(Gln) amidotransferase subunit A (491 aa).

Catalysis depends on charge relay system residues K79 and S158. Residue S182 is the Acyl-ester intermediate of the active site.

This sequence belongs to the amidase family. GatA subfamily. In terms of assembly, heterotrimer of A, B and C subunits.

The catalysed reaction is L-glutamyl-tRNA(Gln) + L-glutamine + ATP + H2O = L-glutaminyl-tRNA(Gln) + L-glutamate + ADP + phosphate + H(+). Allows the formation of correctly charged Gln-tRNA(Gln) through the transamidation of misacylated Glu-tRNA(Gln) in organisms which lack glutaminyl-tRNA synthetase. The reaction takes place in the presence of glutamine and ATP through an activated gamma-phospho-Glu-tRNA(Gln). The sequence is that of Glutamyl-tRNA(Gln) amidotransferase subunit A from Anaplasma phagocytophilum (strain HZ).